Consider the following 422-residue polypeptide: FAD-dependent monooxygenase ptmM (422 aa).

The helical transmembrane segment at 8–24 (VIIVGGSIAGLTLAHCL) threads the bilayer. E35, G49, R108, D308, and A321 together coordinate FAD.

Belongs to the paxM FAD-dependent monooxygenase family. It depends on FAD as a cofactor.

Its subcellular location is the membrane. It participates in secondary metabolite biosynthesis. In terms of biological role, FAD-dependent monooxygenase; part of the gene cluster that mediates the biosynthesis of the indole diterpenes penitrems. The geranylgeranyl diphosphate (GGPP) synthase ptmG catalyzes the first step in penitrem biosynthesis via conversion of farnesyl pyrophosphate and isopentyl pyrophosphate into geranylgeranyl pyrophosphate (GGPP). Condensation of indole-3-glycerol phosphate with GGPP by the prenyl transferase ptmC then forms 3-geranylgeranylindole (3-GGI). Epoxidation by the FAD-dependent monooxygenase ptmM leads to a epoxidized-GGI that is substrate of the terpene cyclase ptmB for cyclization to yield paspaline. Paspaline is subsequently converted to 13-desoxypaxilline by the cytochrome P450 monooxygenase ptmP, the latter being then converted to paxilline by the cytochrome P450 monooxygenase ptmQ. Paxilline is converted to beta-paxitriol via C-10 ketoreduction by the short-chain dehydrogenase ptmH which can be monoprenylated at the C-20 by the indole diterpene prenyltransferase ptmD. A two-step elimination (acetylation and elimination) process performed by the O-acetyltransferase ptmV and ptmI leads to the production of the prenylated form of penijanthine. The FAD-linked oxidoreductase ptmO then converts the prenylated form of penijanthine into PC-M5 which is in turn transformed into PC-M4 by the aromatic dimethylallyltransferase ptmE. Five sequential oxidative transformations performed by the cytochrome P450 monooxygenases ptmK, ptmU, ptmL, ptmN and ptmJ yield the various penitrem compounds. PtmK, ptmU and ptmM are involved in the formation of the key bicyclic ring of penitrem C via the formation of the intermediates secopenitrem D and penitrem D. PtmL catalyzes the epoxidation of penitrem D and C to yield penitrem B and F, respectively. PtmJ catalyzes the last benzylic hydroxylation to convert penitrem B to prenitrem E and penitrem F to penitrem A. In Penicillium ochrochloron, this protein is FAD-dependent monooxygenase ptmM.